We begin with the raw amino-acid sequence, 444 residues long: Phosphoglucosamine mutase (444 aa).

Serine 102 acts as the Phosphoserine intermediate in catalysis. Positions 102, 241, 243, and 245 each coordinate Mg(2+). Serine 102 carries the phosphoserine modification.

It belongs to the phosphohexose mutase family. Requires Mg(2+) as cofactor. In terms of processing, activated by phosphorylation.

It catalyses the reaction alpha-D-glucosamine 1-phosphate = D-glucosamine 6-phosphate. Its function is as follows. Catalyzes the conversion of glucosamine-6-phosphate to glucosamine-1-phosphate. The chain is Phosphoglucosamine mutase from Actinobacillus pleuropneumoniae serotype 5b (strain L20).